A 1133-amino-acid polypeptide reads, in one-letter code: Sterol regulatory element-binding protein 2 (1133 aa).

The interval 1 to 50 is transcriptional activation (acidic); sequence MDENSELGGLETMETLTELGDELTLGDIDEMLQFVSNQVGEFSDLFSEQL. Residues 1–473 are Cytoplasmic-facing; the sequence is MDENSELGGL…VALGMVDRSR (473 aa). The span at 56-65 shows a compositional bias: gly residues; the sequence is GGGGGSGSGG. The interval 56–136 is disordered; it reads GGGGGSGSGG…PQPQPQPPAQ (81 aa). Residues 92–109 are compositionally biased toward low complexity; sequence PLSTFSPSSTSPQAPALQ. Positions 114–134 are enriched in pro residues; it reads PTPPRATPVLQPRPQPQPQPP. The segment at 229 to 483 is interaction with LMNA; that stretch reads QQVPVLVQPQ…ILLCVLTFLG (255 aa). One can recognise a bHLH domain in the interval 322-372; that stretch reads ERRTTHNIIEKRYRSSINDKIIELKDLVMGTDAKMHKSGVLRKAIDYIKYL. The interval 372–393 is leucine-zipper; the sequence is LQQVNHKLRQENMVLKLANQKN. A Glycyl lysine isopeptide (Lys-Gly) (interchain with G-Cter in SUMO2) cross-link involves residue K456. The chain crosses the membrane as a helical span at residues 474-494; that stretch reads ILLCVLTFLGLSFNPLTSLLQ. The Lumenal segment spans residues 495-525; the sequence is WGGAHNPDQHPYSGSGRNVLSLESGSGGWFD. The chain crosses the membrane as a helical span at residues 526–546; that stretch reads WMMPTLLLWLLNGVIVLSVFV. Topologically, residues 547-1133 are cytoplasmic; the sequence is KLLVHGEPVI…LGGGTAIAAS (587 aa). Position 1090 is a phosphoserine (S1090).

It belongs to the SREBP family. Homodimer; efficient DNA binding of the soluble transcription factor fragment requires dimerization with another bHLH protein. Interacts with LMNA. In terms of assembly, forms a tight complex with SCAP, the SCAP-SREBP complex, in the endoplasmic reticulum membrane and the Golgi apparatus. Interacts with PAQR3; the interaction anchors the SCAP-SREBP complex to the Golgi apparatus in low cholesterol conditions. Interacts (via C-terminal domain) with RNF139. Processed in the Golgi apparatus, releasing the protein from the membrane. At low cholesterol the SCAP-SREBP complex is recruited into COPII vesicles for export from the endoplasmic reticulum. In the Golgi, complex SREBPs are cleaved sequentially by site-1 (MBTPS1, S1P) and site-2 (MBTPS2, S2P) proteases. The first cleavage by site-1 protease occurs within the luminal loop, the second cleavage by site-2 protease occurs within the first transmembrane domain, releasing the transcription factor from the Golgi membrane. Apoptosis triggers cleavage by the cysteine proteases caspase-3 and caspase-7. Cleavage and activation is induced by mediated cholesterol efflux. Post-translationally, phosphorylated by AMPK, leading to suppress protein processing and nuclear translocation, and repress target gene expression. In terms of processing, SCAP-free SREBF2 is ubiquitinated by the BCR(ARMC5) complex, leading to its degradation. Ubiquitinated; the nuclear form has a rapid turnover and is rapidly ubiquitinated and degraded by the proteasome in the nucleus.

It localises to the endoplasmic reticulum membrane. Its subcellular location is the golgi apparatus membrane. The protein resides in the cytoplasmic vesicle. It is found in the COPII-coated vesicle membrane. The protein localises to the nucleus. Activation by cleavage is down-regulated upon activation of SIRT3-dependent PRKAA1/AMPK-alpha signaling cascade which leads to inhibition of ATP-consuming lipogenesis to restore cellular energy balance. Its function is as follows. Precursor of the transcription factor form (Processed sterol regulatory element-binding protein 2), which is embedded in the endoplasmic reticulum membrane. Low sterol concentrations promote processing of this form, releasing the transcription factor form that translocates into the nucleus and activates transcription of genes involved in cholesterol biosynthesis. In terms of biological role, key transcription factor that regulates expression of genes involved in cholesterol biosynthesis. Binds to the sterol regulatory element 1 (SRE-1) (5'-ATCACCCCAC-3'). Has dual sequence specificity binding to both an E-box motif (5'-ATCACGTGA-3') and to SRE-1 (5'-ATCACCCCAC-3'). Regulates transcription of genes related to cholesterol synthesis pathway. Regulates hepatic lipogenesis. The polypeptide is Sterol regulatory element-binding protein 2 (Rattus norvegicus (Rat)).